The sequence spans 218 residues: MASRGGGRGRGRGQLTFNMEAVGIGKGDALPPPTLQPSPLFPPLEFHPVPLPAGEEGEYVLALKQELRGAMRQLPYFIRPAVPKRDVERYSDKYQMSGPIDNAIDWNPDWRRLPSELKIRVRKVQKERTTIILPKRPPKSTDDKEETIQKLETLEKKEEEVTSEEDEEKEEEEEKEEGEEEEYDEEEHEEETDYIMSYFDNGEDFGGDSDDNMDEAIY.

Positions T130–Y218 are disordered. Residues K139 to E160 are compositionally biased toward basic and acidic residues. Composition is skewed to acidic residues over residues V161–D193 and N201–Y218.

This sequence belongs to the eukaryotic RPC7 RNA polymerase subunit family. Component of the RNA polymerase III (Pol III) complex consisting of 17 subunits. Pol III exists as two alternative complexes defined by the mutually exclusive incorporation of subunit POLR3G/RPC7alpha or POLR3GL/RPC7beta. Found in a trimeric complex with POLR3C/RPC3 and POLR3F/RPC6. Directly interacts with POLR3C. In terms of tissue distribution, expressed in the liver.

It is found in the nucleus. Functionally, DNA-dependent RNA polymerase catalyzes the transcription of DNA into RNA using the four ribonucleoside triphosphates as substrates. Specific peripheric component of RNA polymerase III which synthesizes small RNAs, such as 5S rRNA and tRNAs. In Mus musculus (Mouse), this protein is DNA-directed RNA polymerase III subunit RPC7-like.